Here is a 357-residue protein sequence, read N- to C-terminus: Arginine kinase (357 aa).

An N-acetylalanine modification is found at alanine 2. The Phosphagen kinase N-terminal domain occupies 9–91; that stretch reads KLEEGFKKLQ…FDPIIEDYHK (83 aa). 64–68 is a binding site for L-arginine; sequence GVGVY. Residues 119-356 form the Phosphagen kinase C-terminal domain; it reads FVISTRVRCG…LELIKIEKEM (238 aa). Residues 122-126 and histidine 185 contribute to the ATP site; that span reads STRVR. Glutamate 225 provides a ligand contact to L-arginine. Position 229 (arginine 229) interacts with ATP. Cysteine 271 contacts L-arginine. ATP contacts are provided by residues 280-284 and 309-314; these read RASVH and RGTRGE. An L-arginine-binding site is contributed by glutamate 314.

Belongs to the ATP:guanido phosphotransferase family.

It carries out the reaction L-arginine + ATP = N(omega)-phospho-L-arginine + ADP + H(+). The protein is Arginine kinase of Pachygrapsus marmoratus (Marbled rock crab).